The sequence spans 312 residues: MPQQSMQASLRDPIAEIERSNCKIAHLRLGLVFTSDNNERALQDSGLYSPDSEDSSVDIAGRRFHSGTLNGSSIVYVKTGSHSVNMATTLQILLARFSIHGVIYFGNAGSLDKKTMVPGDVSVPQAVAFTGVCNWKKFRSEKGKLVFGDFNYPENGENLLGTVEYEKIKMFSPSEAPKEVFWLPITKSWYNAATEALKDMKLRKCYSDECLPGEPKVVFGSKSSTSDFYVRNKAYGDFLNDNFDAKTADTTSASVALTSLSNEKLFVVFQGVSNVAGETSSNSRVSYLASYNAFLAATKFINSIPTPRLACE.

Positions 1 to 24 (MPQQSMQASLRDPIAEIERSNCKI) are cleaved as a signal peptide. A glycan (N-linked (GlcNAc...) asparagine) is linked at asparagine 70.

To wound-inducible poplar endochitinases. In terms of assembly, monomer. Bark tissue.

In terms of biological role, may play a role in nitrogen storage. In Populus deltoides (Eastern poplar), this protein is Bark storage protein B (BSP).